Here is a 335-residue protein sequence, read N- to C-terminus: Vitamin B12 import system permease protein BtuC (335 aa).

Helical transmembrane passes span 25–45 (LVVI…IWLW), 67–87 (LAVL…QALF), 95–114 (GLLG…VLLG), 118–140 (LPIW…LLLG), 153–173 (LLVG…AVYF), 200–220 (LVLA…VLNF), 243–263 (VLAI…ISFI), 286–306 (CALA…IALF), and 308–328 (AELP…IWLL).

It belongs to the binding-protein-dependent transport system permease family. FecCD subfamily. In terms of assembly, the complex is composed of two ATP-binding proteins (BtuD), two transmembrane proteins (BtuC) and a solute-binding protein (BtuF).

Its subcellular location is the cell inner membrane. Part of the ABC transporter complex BtuCDF involved in vitamin B12 import. Involved in the translocation of the substrate across the membrane. The chain is Vitamin B12 import system permease protein BtuC from Yersinia enterocolitica serotype O:8 / biotype 1B (strain NCTC 13174 / 8081).